A 59-amino-acid chain; its full sequence is Small ribosomal subunit protein bS21 (59 aa).

It belongs to the bacterial ribosomal protein bS21 family.

This chain is Small ribosomal subunit protein bS21, found in Acaryochloris marina (strain MBIC 11017).